Here is a 382-residue protein sequence, read N- to C-terminus: Proton extrusion protein PxcA (382 aa).

4 consecutive transmembrane segments (helical) span residues 162–182, 257–277, 305–325, and 340–360; these read VLLLLVLVPLLVSQISGTYLI, AIKNVFADLAGLIAFAVVCLM, IILFTDIFVGYHSPEGWSVLL, and FVNLFIATFPVVLATIFKYWI.

The protein belongs to the CemA family.

It localises to the cell inner membrane. In terms of biological role, required for H(+) efflux immediately after light irradiation to form a rapid H(+) concentration gradient across the thylakoid membranes. Together with PxcL, contributes to transient H(+) uptake following dark to light transition. This is Proton extrusion protein PxcA from Synechococcus sp. (strain CC9605).